A 792-amino-acid chain; its full sequence is Phenylalanine--tRNA ligase beta subunit (792 aa).

One can recognise a tRNA-binding domain in the interval 38-148; it reads NTKLAGFIVA…DDYKVGNKFF (111 aa). The 77-residue stretch at 406–482 folds into the B5 domain; sequence EADTKVSFDY…RIYGYDKIKE (77 aa). Residues D460, D466, E469, and E470 each coordinate Mg(2+). Residues 698–790 enclose the FDX-ACB domain; the sequence is YKHQSVKRDF…VHKNTGGILR (93 aa).

This sequence belongs to the phenylalanyl-tRNA synthetase beta subunit family. Type 1 subfamily. In terms of assembly, tetramer of two alpha and two beta subunits. Requires Mg(2+) as cofactor.

The protein localises to the cytoplasm. It catalyses the reaction tRNA(Phe) + L-phenylalanine + ATP = L-phenylalanyl-tRNA(Phe) + AMP + diphosphate + H(+). In Wolbachia sp. subsp. Brugia malayi (strain TRS), this protein is Phenylalanine--tRNA ligase beta subunit.